The chain runs to 221 residues: Deep sea actinoporin Cjtox II (221 aa).

A signal peptide spans 1–19; the sequence is MNRLIIVCLVAAMIYSTIA. Positions 20 to 42 are excised as a propeptide; the sequence is LPMKEDISNDERPISVNEEPVKK. Ser-96, Val-129, Ser-147, Pro-149, Tyr-175, Tyr-179, and Tyr-180 together coordinate phosphocholine. Positions 147–162 are trp-rich region, which is important for the binding to lipid membrane; the sequence is SVPYDYNWYENWWNIK. Positions 186–188 match the Cell attachment site, crucial for protein stability motif; that stretch reads KGD.

This sequence belongs to the actinoporin family. Sea anemone subfamily. In terms of assembly, octamer or nonamer in membranes. Monomer in the soluble state. Expressed in actinopharynx and in gastric filaments. Is not expressed in tentacles.

The protein localises to the secreted. The protein resides in the nematocyst. It is found in the target cell membrane. May be involved in digestion of prey. Pore-forming protein that forms cations-selective hydrophilic pores of around 1 nm and causes cytolysis. Pore formation is a multi-step process that involves specific recognition of membrane sphingomyelin (but neither cholesterol nor phosphatidylcholine) using aromatic rich region and adjacent phosphocholine (POC) binding site, firm binding to the membrane (mainly driven by hydrophobic interactions) accompanied by the transfer of the N-terminal region to the lipid-water interface and finally pore formation after oligomerization of monomers. Shows hemolytic activity on equine erythrocytes. Hemolysis is highly inhibited in presence of sphingomyelin, suggesting that this protein targets sphingomyelin. The chain is Deep sea actinoporin Cjtox II from Cribrinopsis japonica (Deep-sea anemone).